The chain runs to 3092 residues: Inhibitory regulator protein IRA1 (3092 aa).

Disordered regions lie at residues 375 to 430 and 450 to 487; these read HLHH…MASL and LGQA…NSAN. The span at 379–400 shows a compositional bias: low complexity; that stretch reads SSSSSKTTNTNSPNSISKTSIK. Residues 401–430 are compositionally biased toward polar residues; sequence QSSVNASGNVSPSQFSTGNDASPTSPMASL. A compositionally biased stretch (low complexity) spans 455-487; it reads TSTSTTAATTKTDADTPSTMNTNNNNNNNNSAN. Phosphoserine occurs at positions 497 and 915. Disordered stretches follow at residues 946-988 and 1003-1023; these read SGVP…VLSS and TILK…ADDK. Residues 965–988 show a composition bias toward low complexity; the sequence is QSPYSSPPQLQQSDLPSPLSVLSS. S1342 carries the phosphoserine modification. Positions 1725-1930 constitute a Ras-GAP domain; that stretch reads NASHILVTEL…DKIFNFLSEL (206 aa). 2 positions are modified to phosphoserine; by PKA: S1753 and S3004.

Its subcellular location is the cytoplasm. Functionally, inhibitory regulator of the Ras-cyclic AMP pathway in S.cerevisiae. Stimulates the GTPase activity of Ras proteins. The protein is Inhibitory regulator protein IRA1 (IRA1) of Saccharomyces cerevisiae (strain ATCC 204508 / S288c) (Baker's yeast).